A 90-amino-acid polypeptide reads, in one-letter code: Small ribosomal subunit protein bS20 (90 aa).

A compositionally biased stretch (polar residues) spans 1–10 (MANHKSTQKS). The interval 1–25 (MANHKSTQKSIRQDQKRNLINKSRK) is disordered.

The protein belongs to the bacterial ribosomal protein bS20 family.

Functionally, binds directly to 16S ribosomal RNA. This chain is Small ribosomal subunit protein bS20, found in Orientia tsutsugamushi (strain Boryong) (Rickettsia tsutsugamushi).